The following is a 477-amino-acid chain: ETS translocation variant 1 (477 aa).

Phosphoserine is present on Ser-94. Residues 128 to 179 form a disordered region; it reads PQVGMRPSNPPTPSSTPVSPLHHASPNSTHTPKPDRAFPAHLPPSQSIPDSS. Phosphoserine; by RPS6KA1 and RPS6KA5 is present on residues Ser-191 and Ser-216. Residue Lys-317 forms a Glycyl lysine isopeptide (Lys-Gly) (interchain with G-Cter in SUMO2) linkage. Positions 335–415 form a DNA-binding region, ETS; the sequence is LQLWQFLVAL…AGERYVYKFV (81 aa).

Belongs to the ETS family. Sumoylated. Post-translationally, phosphorylated at Ser-191 and Ser-216 by RPS6KA1 and RPS6KA5; phosphorylation activates transcriptional activity. Very highly expressed in brain, highly expressed in testis, lung and heart, moderately in spleen, small intestine, pancreas and colon, weakly in liver, prostate and thymus, very weakly in skeletal muscle, kidney and ovary and not in placenta and peripheral blood leukocytes.

Its subcellular location is the nucleus. Its function is as follows. Transcriptional activator that binds to DNA sequences containing the consensus pentanucleotide 5'-CGGA[AT]-3'. Required for olfactory dopaminergic neuron differentiation; may directly activate expression of tyrosine hydroxylase (TH). The protein is ETS translocation variant 1 of Homo sapiens (Human).